Here is a 438-residue protein sequence, read N- to C-terminus: L-cysteine:1D-myo-inositol 2-amino-2-deoxy-alpha-D-glucopyranoside ligase (438 aa).

Positions M1–G27 are disordered. C45 is a Zn(2+) binding site. L-cysteinyl-5'-AMP is bound by residues C45–T48, T60, and N83–T85. The short motif at I47–H57 is the 'HIGH' region element. The 'ERGGDP' region signature appears at D197–P202. W238 serves as a coordination point for L-cysteinyl-5'-AMP. C242 is a Zn(2+) binding site. Position 260-262 (G260–D262) interacts with L-cysteinyl-5'-AMP. Residue H267 coordinates Zn(2+). L-cysteinyl-5'-AMP is bound at residue V293. Residues K299–S303 carry the 'KMSKS' region motif.

It belongs to the class-I aminoacyl-tRNA synthetase family. MshC subfamily. Monomer. Zn(2+) is required as a cofactor.

It carries out the reaction 1D-myo-inositol 2-amino-2-deoxy-alpha-D-glucopyranoside + L-cysteine + ATP = 1D-myo-inositol 2-(L-cysteinylamino)-2-deoxy-alpha-D-glucopyranoside + AMP + diphosphate + H(+). Catalyzes the ATP-dependent condensation of GlcN-Ins and L-cysteine to form L-Cys-GlcN-Ins. This chain is L-cysteine:1D-myo-inositol 2-amino-2-deoxy-alpha-D-glucopyranoside ligase, found in Kytococcus sedentarius (strain ATCC 14392 / DSM 20547 / JCM 11482 / CCUG 33030 / NBRC 15357 / NCTC 11040 / CCM 314 / 541) (Micrococcus sedentarius).